The following is a 397-amino-acid chain: ATP-dependent RNA helicase eIF4A (397 aa).

Residues 24-52 (DSFDEMNLKPELLRGIYAYGFERPSAIQQ) carry the Q motif motif. The region spanning 55 to 225 (IMPVIKGHDV…TKFMREPVRI (171 aa)) is the Helicase ATP-binding domain. 68-75 (AQSGTGKT) lines the ATP pocket. A DEAD box motif is present at residues 173–176 (DEAD). The Helicase C-terminal domain maps to 236–397 (GIKQFYIAVE…EMPMNVADLI (162 aa)).

The protein belongs to the DEAD box helicase family. eIF4A subfamily. Component of the eIF4F complex, which composition varies with external and internal environmental conditions. It is composed of at least eIF4A, eIF4E and eIF4G.

The protein resides in the cytoplasm. It carries out the reaction ATP + H2O = ADP + phosphate + H(+). ATP-dependent RNA helicase which is a subunit of the eIF4F complex involved in cap recognition and is required for mRNA binding to ribosome. In the current model of translation initiation, eIF4A unwinds RNA secondary structures in the 5'-UTR of mRNAs which is necessary to allow efficient binding of the small ribosomal subunit, and subsequent scanning for the initiator codon. The polypeptide is ATP-dependent RNA helicase eIF4A (tif-1) (Neurospora crassa (strain ATCC 24698 / 74-OR23-1A / CBS 708.71 / DSM 1257 / FGSC 987)).